The following is a 142-amino-acid chain: Large ribosomal subunit protein uL11 (142 aa).

It belongs to the universal ribosomal protein uL11 family. In terms of assembly, part of the ribosomal stalk of the 50S ribosomal subunit. Interacts with L10 and the large rRNA to form the base of the stalk. L10 forms an elongated spine to which L12 dimers bind in a sequential fashion forming a multimeric L10(L12)X complex. Post-translationally, one or more lysine residues are methylated.

Functionally, forms part of the ribosomal stalk which helps the ribosome interact with GTP-bound translation factors. The polypeptide is Large ribosomal subunit protein uL11 (Aeromonas hydrophila subsp. hydrophila (strain ATCC 7966 / DSM 30187 / BCRC 13018 / CCUG 14551 / JCM 1027 / KCTC 2358 / NCIMB 9240 / NCTC 8049)).